We begin with the raw amino-acid sequence, 791 residues long: ATP-dependent 6-phosphofructokinase, platelet type (791 aa).

N-acetylmethionine is present on Met-1. Residues 1–399 (MDNKVSASPR…NLNTYKRLAI (399 aa)) form an N-terminal catalytic PFK domain 1 region. Ser-6 bears the Phosphoserine mark. Phosphoserine; by PKA is present on Ser-12. Ser-21 carries the phosphoserine modification. Residues Gly-34, 97–98 (RS), and 127–130 (GSGS) each bind ATP. A Phosphoserine modification is found at Ser-142. Residues 173 to 175 (SID), Arg-210, 217 to 219 (MGR), Glu-273, Arg-301, and 307 to 310 (HVQR) contribute to the substrate site. Asp-175 serves as the catalytic Proton acceptor. Phosphoserine is present on Ser-386. Lys-395 is subject to N6-acetyllysine. The interval 400 to 411 (KLPDDKIQKSNC) is interdomain linker. A C-terminal regulatory PFK domain 2 region spans residues 412 to 791 (NVAVINVGAP…RGGPEEPAAI (380 aa)). Arg-481 is a binding site for beta-D-fructose 2,6-bisphosphate. An N6-acetyllysine modification is found at Lys-486. Residues 538–542 (TVSNN), Arg-576, 583–585 (MGG), and Glu-639 each bind beta-D-fructose 2,6-bisphosphate. A glycan (O-linked (GlcNAc) serine) is linked at Ser-540. A Phosphotyrosine modification is found at Tyr-651. Residues Arg-665 and 671–674 (HMQQ) contribute to the beta-D-fructose 2,6-bisphosphate site. At Lys-688 the chain carries N6-acetyllysine. Beta-D-fructose 2,6-bisphosphate is bound at residue Arg-744.

The protein belongs to the phosphofructokinase type A (PFKA) family. ATP-dependent PFK group I subfamily. Eukaryotic two domain clade 'E' sub-subfamily. As to quaternary structure, homo- and heterotetramers. Phosphofructokinase (PFK) enzyme functions as a tetramer composed of different combinations of 3 types of subunits, called PFKM (M), PFKL (L) and PFKP (P). The composition of the PFK tetramer differs according to the tissue type it is present in. The kinetic and regulatory properties of the tetrameric enzyme are dependent on the subunit composition, hence can vary across tissues. Interacts with ATG4B; promoting phosphorylation of ATG4B. Requires Mg(2+) as cofactor. Post-translationally, glcNAcylation decreases enzyme activity. Phosphorylation at Ser-386 promotes interaction with ATG4B.

The protein resides in the cytoplasm. The enzyme catalyses beta-D-fructose 6-phosphate + ATP = beta-D-fructose 1,6-bisphosphate + ADP + H(+). Its pathway is carbohydrate degradation; glycolysis; D-glyceraldehyde 3-phosphate and glycerone phosphate from D-glucose: step 3/4. Its activity is regulated as follows. Allosterically activated by ADP, AMP, or fructose 2,6-bisphosphate, and allosterically inhibited by ATP or citrate. In terms of biological role, catalyzes the phosphorylation of D-fructose 6-phosphate to fructose 1,6-bisphosphate by ATP, the first committing step of glycolysis. In Oryctolagus cuniculus (Rabbit), this protein is ATP-dependent 6-phosphofructokinase, platelet type (PFKP).